A 308-amino-acid polypeptide reads, in one-letter code: Methionyl-tRNA formyltransferase (308 aa).

110 to 113 contacts (6S)-5,6,7,8-tetrahydrofolate; the sequence is SLLP.

This sequence belongs to the Fmt family.

It carries out the reaction L-methionyl-tRNA(fMet) + (6R)-10-formyltetrahydrofolate = N-formyl-L-methionyl-tRNA(fMet) + (6S)-5,6,7,8-tetrahydrofolate + H(+). Functionally, attaches a formyl group to the free amino group of methionyl-tRNA(fMet). The formyl group appears to play a dual role in the initiator identity of N-formylmethionyl-tRNA by promoting its recognition by IF2 and preventing the misappropriation of this tRNA by the elongation apparatus. The polypeptide is Methionyl-tRNA formyltransferase (Neisseria meningitidis serogroup B (strain ATCC BAA-335 / MC58)).